We begin with the raw amino-acid sequence, 733 residues long: Arginine decarboxylase 1A, chloroplastic (733 aa).

Residues 1–44 (MPALGCCVDAAVSPPPGYSFLWDSSLPAPEIFPSGVPPSTNTAV) constitute a chloroplast transit peptide. Lys157 is subject to N6-(pyridoxal phosphate)lysine. Pyridoxal 5'-phosphate contacts are provided by residues Ser309, Gly346, and 395–398 (ESGR). Residue 460–461 (YA) participates in substrate binding. Catalysis depends on Cys548, which acts as the Proton donor; shared with dimeric partner. Position 549 (Asp549) interacts with substrate. Position 592 (Tyr592) interacts with pyridoxal 5'-phosphate.

This sequence belongs to the Orn/Lys/Arg decarboxylase class-II family. SpeA subfamily. In terms of assembly, interacts, via its C-terminal internal region, with the tobacco mosaic virus (TMV) replicase helicase region. Mg(2+) serves as cofactor. It depends on pyridoxal 5'-phosphate as a cofactor.

Its subcellular location is the plastid. The protein localises to the chloroplast. It carries out the reaction L-arginine + H(+) = agmatine + CO2. It participates in alkaloid biosynthesis; nicotine biosynthesis. Its pathway is amine and polyamine biosynthesis; agmatine biosynthesis; agmatine from L-arginine: step 1/1. Involved in the biosynthesis of pyridine alkaloid natural products, leading mainly to the production of anabasine, anatabine, nicotine and nornicotine, effective deterrents against herbivores with antiparasitic and pesticide properties (neurotoxins); nornicotine serves as the precursor in the synthesis of the carcinogen compound N'-nitrosonornicotine (NNN). Required for the biosynthesis of putrescine. Catalyzes the first step of polyamine (PA) biosynthesis to produce putrescine from arginine. This is Arginine decarboxylase 1A, chloroplastic from Nicotiana tabacum (Common tobacco).